Here is a 944-residue protein sequence, read N- to C-terminus: Weak acid resistance protein 1 (944 aa).

The zn(2)-C6 fungal-type DNA-binding region spans 76–109; sequence CVCCHSLKQKCEPSDVNDIYRKPCRRCLKHKKLC. 2 disordered regions span residues 114–171 and 197–225; these read SKRT…AKQF and SYGA…SVPT. A Phosphothreonine modification is found at Thr-128. 2 stretches are compositionally biased toward polar residues: residues 135 to 144 and 205 to 225; these read VNVSTKSKGP and TTST…SVPT.

Homodimer. Phosphorylation is required for PDR12 induction.

Its subcellular location is the nucleus. In terms of biological role, transcription factor which binds to a weak acid response element (WARE) to mediate stress induction of PDR12 and FUN34, encoding an acid transporter and a putative ammonia transporter, respectively. This is Weak acid resistance protein 1 (WAR1) from Saccharomyces cerevisiae (strain ATCC 204508 / S288c) (Baker's yeast).